Consider the following 337-residue polypeptide: Heme A synthase (337 aa).

Helical transmembrane passes span 6–26 (ITKW…IGGI), 87–107 (FIHR…VIYF), 119–139 (LPYI…WYMV), 154–174 (LAFH…QLIK), and 192–212 (LIFS…GALV). His256 contributes to the heme binding site. Transmembrane regions (helical) follow at residues 258–278 (LVGY…LKIE), 285–305 (IAYF…ITLL), and 308–328 (VPII…SVII). His316 provides a ligand contact to heme.

The protein belongs to the COX15/CtaA family. Type 2 subfamily. Interacts with CtaB. Heme b serves as cofactor.

It is found in the cell membrane. The enzyme catalyses Fe(II)-heme o + 2 A + H2O = Fe(II)-heme a + 2 AH2. It functions in the pathway porphyrin-containing compound metabolism; heme A biosynthesis; heme A from heme O: step 1/1. Functionally, catalyzes the conversion of heme O to heme A by two successive hydroxylations of the methyl group at C8. The first hydroxylation forms heme I, the second hydroxylation results in an unstable dihydroxymethyl group, which spontaneously dehydrates, resulting in the formyl group of heme A. The polypeptide is Heme A synthase (Rickettsia rickettsii (strain Iowa)).